The primary structure comprises 500 residues: Probable cytosol aminopeptidase (500 aa).

Mn(2+)-binding residues include lysine 261 and aspartate 266. Residue lysine 273 is part of the active site. The Mn(2+) site is built by aspartate 284, aspartate 343, and glutamate 345. Arginine 347 is a catalytic residue.

This sequence belongs to the peptidase M17 family. The cofactor is Mn(2+).

It localises to the cytoplasm. It catalyses the reaction Release of an N-terminal amino acid, Xaa-|-Yaa-, in which Xaa is preferably Leu, but may be other amino acids including Pro although not Arg or Lys, and Yaa may be Pro. Amino acid amides and methyl esters are also readily hydrolyzed, but rates on arylamides are exceedingly low.. The catalysed reaction is Release of an N-terminal amino acid, preferentially leucine, but not glutamic or aspartic acids.. Functionally, presumably involved in the processing and regular turnover of intracellular proteins. Catalyzes the removal of unsubstituted N-terminal amino acids from various peptides. The protein is Probable cytosol aminopeptidase (pepA) of Bacillus subtilis (strain 168).